The following is a 650-amino-acid chain: Aminopeptidase B (650 aa).

Residue 298–302 (GGMEN) coordinates substrate. Histidine 325 is a Zn(2+) binding site. Glutamate 326 acts as the Proton acceptor in catalysis. Histidine 329 and glutamate 348 together coordinate Zn(2+). Lysine 446 carries the post-translational modification N6-acetyllysine.

This sequence belongs to the peptidase M1 family. As to quaternary structure, monomer. Requires Zn(2+) as cofactor.

The protein resides in the secreted. The catalysed reaction is Release of N-terminal Arg and Lys from oligopeptides when P1' is not Pro. Also acts on arylamides of Arg and Lys.. Exopeptidase which selectively removes arginine and/or lysine residues from the N-terminus of several peptide substrates including Arg(0)-Leu-enkephalin, Arg(0)-Met-enkephalin and Arg(-1)-Lys(0)-somatostatin-14. Can hydrolyze leukotriene A4 (LTA-4) into leukotriene B4 (LTB-4). The sequence is that of Aminopeptidase B (Rnpep) from Mus musculus (Mouse).